The sequence spans 391 residues: Elongation factor Tu (391 aa).

The 192-residue stretch at K10–E201 folds into the tr-type G domain. The interval G19–T26 is G1. G19–T26 provides a ligand contact to GTP. T26 serves as a coordination point for Mg(2+). The segment at G55–S59 is G2. The tract at residues D76–G79 is G3. GTP contacts are provided by residues D76–H80 and N131–D134. The G4 stretch occupies residues N131 to D134. A G5 region spans residues S169 to L171.

It belongs to the TRAFAC class translation factor GTPase superfamily. Classic translation factor GTPase family. EF-Tu/EF-1A subfamily. Monomer.

It localises to the cytoplasm. It catalyses the reaction GTP + H2O = GDP + phosphate + H(+). In terms of biological role, GTP hydrolase that promotes the GTP-dependent binding of aminoacyl-tRNA to the A-site of ribosomes during protein biosynthesis. The polypeptide is Elongation factor Tu (Roseobacter denitrificans (strain ATCC 33942 / OCh 114) (Erythrobacter sp. (strain OCh 114))).